A 91-amino-acid chain; its full sequence is Large ribosomal subunit protein bL31B (91 aa).

This sequence belongs to the bacterial ribosomal protein bL31 family. Type B subfamily. As to quaternary structure, part of the 50S ribosomal subunit.

This is Large ribosomal subunit protein bL31B from Neisseria gonorrhoeae (strain NCCP11945).